Consider the following 89-residue polypeptide: UPF0145 protein MJ1170 (89 aa).

It belongs to the UPF0145 family. Highly divergent.

The chain is UPF0145 protein MJ1170 from Methanocaldococcus jannaschii (strain ATCC 43067 / DSM 2661 / JAL-1 / JCM 10045 / NBRC 100440) (Methanococcus jannaschii).